The primary structure comprises 216 residues: Somatotropin (216 aa).

Positions 1–26 (MAADSQTSRLLTFTLLCLLWPQEAGA) are cleaved as a signal peptide. His45 is a binding site for Zn(2+). A disulfide bridge links Cys78 with Cys189. The residue at position 131 (Ser131) is a Phosphoserine. Position 198 (Glu198) interacts with Zn(2+). A disulfide bond links Cys206 and Cys214.

The protein belongs to the somatotropin/prolactin family.

It is found in the secreted. Its function is as follows. Plays an important role in growth control. Its major role in stimulating body growth is to stimulate the liver and other tissues to secrete IGF1. It stimulates both the differentiation and proliferation of myoblasts. It also stimulates amino acid uptake and protein synthesis in muscle and other tissues. This chain is Somatotropin (GH1), found in Mesocricetus auratus (Golden hamster).